Here is a 195-residue protein sequence, read N- to C-terminus: Probable GTP-binding protein EngB (195 aa).

The EngB-type G domain maps to 24–195 (ELPEIALAGR…EAWDAILEKL (172 aa)). Residues 32 to 39 (GRSNVGKS), 59 to 63 (GKTQL), 77 to 80 (DVPG), 144 to 147 (TKAD), and 176 to 178 (FSS) each bind GTP. Residues Ser-39 and Thr-61 each contribute to the Mg(2+) site.

The protein belongs to the TRAFAC class TrmE-Era-EngA-EngB-Septin-like GTPase superfamily. EngB GTPase family. Mg(2+) serves as cofactor.

Its function is as follows. Necessary for normal cell division and for the maintenance of normal septation. This chain is Probable GTP-binding protein EngB, found in Streptococcus pneumoniae serotype 4 (strain ATCC BAA-334 / TIGR4).